Reading from the N-terminus, the 302-residue chain is AT-hook motif nuclear-localized protein 29 (302 aa).

Residues 1 to 95 (MDGGYDQSGG…KPPVIVTRDS (95 aa)) are disordered. The span at 32–44 (QLHPLPQPQPQPQ) shows a compositional bias: pro residues. The a.T hook DNA-binding region spans 72–84 (KRPRGRPPGSKNK). The 146-residue stretch at 96–241 (PNVLRSHVLE…DEGGEGGEGG (146 aa)) folds into the PPC domain. The interval 164–169 (GRFEIL) is required for the binding to non-AHL interactors. The tract at residues 229 to 279 (PLEDEGGEGGEGGEVGEGGGGEGGPPPATSSSPPSGAGQGQLRGNMSGYDQ) is disordered. A compositionally biased stretch (gly residues) spans 237–251 (GGEGGEVGEGGGGEG).

In terms of assembly, homodimer. Interacts with AHL5, AHL12, AHL25, AHL27, TCP4, TCP13 and EF114. Expressed in the hypocotyl and the vascular tissue of seedling.

It localises to the nucleus. Functionally, transcription factor that specifically binds AT-rich DNA sequences related to the nuclear matrix attachment regions (MARs). Acts redundantly with AHL18, AHL22 and AHL27 in the regulation of flowering and regulation of the hypocotyl elongation. Acts redundantly with AHL27/ESC to modulate hypocotyl growth inhibition in response to light. This chain is AT-hook motif nuclear-localized protein 29, found in Arabidopsis thaliana (Mouse-ear cress).